Reading from the N-terminus, the 315-residue chain is tRNA wybutosine-synthesizing protein 5 (315 aa).

Positions 102–267 (DEKYYLRSLG…YDKTDTYGNK (166 aa)) constitute a JmjC domain. Y106 is a 2-oxoglutarate binding site. The Fe cation site is built by H160 and D162. 2 residues coordinate 2-oxoglutarate: N166 and K175. Position 235 (H235) interacts with Fe cation.

This sequence belongs to the TYW5 family. Homodimer. Requires Fe(2+) as cofactor.

The enzyme catalyses 7-[(3S)-3-amino-3-carboxypropyl]wyosine(37) in tRNA(Phe) + 2-oxoglutarate + O2 = 7-(2-hydroxy-3-amino-3-carboxypropyl)wyosine(37) in tRNA(Phe) + succinate + CO2. It participates in tRNA modification; wybutosine-tRNA(Phe) biosynthesis. In terms of biological role, tRNA hydroxylase that acts as a component of the wybutosine biosynthesis pathway. Wybutosine is a hyper modified guanosine with a tricyclic base found at the 3'-position adjacent to the anticodon of eukaryotic phenylalanine tRNA. Catalyzes the hydroxylation of 7-(a-amino-a-carboxypropyl)wyosine (yW-72) into undermodified hydroxywybutosine (OHyW*). OHyW* being further transformed into hydroxywybutosine (OHyW) by LCMT2/TYW4. OHyW is a derivative of wybutosine found in higher eukaryotes. The chain is tRNA wybutosine-synthesizing protein 5 (TYW5) from Homo sapiens (Human).